The chain runs to 330 residues: Ferredoxin--NADP reductase (330 aa).

7 residues coordinate FAD: glutamate 35, glutamine 43, tyrosine 48, valine 90, phenylalanine 123, aspartate 285, and threonine 326.

It belongs to the ferredoxin--NADP reductase type 2 family. As to quaternary structure, homodimer. FAD is required as a cofactor.

It catalyses the reaction 2 reduced [2Fe-2S]-[ferredoxin] + NADP(+) + H(+) = 2 oxidized [2Fe-2S]-[ferredoxin] + NADPH. The polypeptide is Ferredoxin--NADP reductase (Streptococcus agalactiae serotype Ia (strain ATCC 27591 / A909 / CDC SS700)).